The primary structure comprises 406 residues: Probable 2,3-bisphosphoglycerate-independent phosphoglycerate mutase (406 aa).

This sequence belongs to the BPG-independent phosphoglycerate mutase family. A-PGAM subfamily.

It catalyses the reaction (2R)-2-phosphoglycerate = (2R)-3-phosphoglycerate. Its pathway is carbohydrate degradation; glycolysis; pyruvate from D-glyceraldehyde 3-phosphate: step 3/5. Functionally, catalyzes the interconversion of 2-phosphoglycerate and 3-phosphoglycerate. The sequence is that of Probable 2,3-bisphosphoglycerate-independent phosphoglycerate mutase from Thermus thermophilus (strain ATCC BAA-163 / DSM 7039 / HB27).